The sequence spans 679 residues: tRNA uridine 5-carboxymethylaminomethyl modification enzyme MnmG (679 aa).

13 to 18 (GGGHAG) is an FAD binding site. 280–294 (GPRYCPSVEDKINRF) provides a ligand contact to NAD(+).

It belongs to the MnmG family. As to quaternary structure, homodimer. Heterotetramer of two MnmE and two MnmG subunits. FAD is required as a cofactor.

Its subcellular location is the cytoplasm. Its function is as follows. NAD-binding protein involved in the addition of a carboxymethylaminomethyl (cmnm) group at the wobble position (U34) of certain tRNAs, forming tRNA-cmnm(5)s(2)U34. The sequence is that of tRNA uridine 5-carboxymethylaminomethyl modification enzyme MnmG from Albidiferax ferrireducens (strain ATCC BAA-621 / DSM 15236 / T118) (Rhodoferax ferrireducens).